A 447-amino-acid polypeptide reads, in one-letter code: N-succinylarginine dihydrolase (447 aa).

Residues 19–28 (AGLSFGNEAS), Asn110, and 137–138 (HR) each bind substrate. Residue Glu174 is part of the active site. Arg212 serves as a coordination point for substrate. Residue His248 is part of the active site. Positions 250 and 359 each coordinate substrate. Cys365 functions as the Nucleophile in the catalytic mechanism.

The protein belongs to the succinylarginine dihydrolase family. As to quaternary structure, homodimer.

It carries out the reaction N(2)-succinyl-L-arginine + 2 H2O + 2 H(+) = N(2)-succinyl-L-ornithine + 2 NH4(+) + CO2. Its pathway is amino-acid degradation; L-arginine degradation via AST pathway; L-glutamate and succinate from L-arginine: step 2/5. Functionally, catalyzes the hydrolysis of N(2)-succinylarginine into N(2)-succinylornithine, ammonia and CO(2). The sequence is that of N-succinylarginine dihydrolase from Escherichia coli O7:K1 (strain IAI39 / ExPEC).